The chain runs to 718 residues: Polyribonucleotide nucleotidyltransferase (718 aa).

Mg(2+)-binding residues include aspartate 487 and aspartate 493. Residues proline 554–isoleucine 613 form the KH domain. Residues glycine 623–arginine 691 form the S1 motif domain. Residues aspartate 694–glutamate 718 form a disordered region.

Belongs to the polyribonucleotide nucleotidyltransferase family. Requires Mg(2+) as cofactor.

Its subcellular location is the cytoplasm. The catalysed reaction is RNA(n+1) + phosphate = RNA(n) + a ribonucleoside 5'-diphosphate. Its function is as follows. Involved in mRNA degradation. Catalyzes the phosphorolysis of single-stranded polyribonucleotides processively in the 3'- to 5'-direction. The sequence is that of Polyribonucleotide nucleotidyltransferase from Rhodopseudomonas palustris (strain HaA2).